The primary structure comprises 560 residues: Phenylalanine--tRNA ligase beta subunit (560 aa).

The B5 domain maps to 279 to 354 (LTPKEFEVDL…IAYGYNNIEP (76 aa)). 4 residues coordinate Mg(2+): aspartate 332, aspartate 338, glutamate 341, and aspartate 342.

Belongs to the phenylalanyl-tRNA synthetase beta subunit family. Type 2 subfamily. As to quaternary structure, tetramer of two alpha and two beta subunits. Mg(2+) serves as cofactor.

The protein resides in the cytoplasm. The enzyme catalyses tRNA(Phe) + L-phenylalanine + ATP = L-phenylalanyl-tRNA(Phe) + AMP + diphosphate + H(+). The sequence is that of Phenylalanine--tRNA ligase beta subunit from Thermococcus sibiricus (strain DSM 12597 / MM 739).